Here is a 280-residue protein sequence, read N- to C-terminus: Gem-associated protein 2 (280 aa).

The interval M1–G39 is may play a minor inhibitory role in snRNA binding to 5Sm (SNRPD1, SNRPD2, SNRPE, SNRPF and SNRPG) during snRNP assembly by inserting into the RNA binding pocket of 5Sm. Phosphoserine is present on residues S81 and S166.

Belongs to the gemin-2 family. In terms of assembly, monomer. Part of the core SMN complex that contains SMN1, GEMIN2/SIP1, DDX20/GEMIN3, GEMIN4, GEMIN5, GEMIN6, GEMIN7, GEMIN8 and STRAP/UNRIP. Part of the SMN-Sm complex that contains SMN1, GEMIN2/SIP1, DDX20/GEMIN3, GEMIN4, GEMIN5, GEMIN6, GEMIN7, GEMIN8, STRAP/UNRIP and the Sm proteins SNRPB, SNRPD1, SNRPD2, SNRPD3, SNRPE, SNRPF and SNRPG. Interacts with GEMIN5; the interaction is direct. Interacts (via C-terminus) with SMN1; the interaction is direct. Interacts with SNRPD1; the interaction is direct. Interacts with SNRPD2; the interaction is direct. Interacts (via N-terminus) with SNRPF; the interaction is direct. Interacts (via N-terminus) with SNRPE; the interaction is direct. Interacts (via N-terminus) with SNRPG; the interaction is direct.

The protein localises to the nucleus. The protein resides in the gem. It localises to the cytoplasm. The SMN complex catalyzes the assembly of small nuclear ribonucleoproteins (snRNPs), the building blocks of the spliceosome, and thereby plays an important role in the splicing of cellular pre-mRNAs. Most spliceosomal snRNPs contain a common set of Sm proteins SNRPB, SNRPD1, SNRPD2, SNRPD3, SNRPE, SNRPF and SNRPG that assemble in a heptameric protein ring on the Sm site of the small nuclear RNA to form the core snRNP (Sm core). In the cytosol, the Sm proteins SNRPD1, SNRPD2, SNRPE, SNRPF and SNRPG (5Sm) are trapped in an inactive 6S pICln-Sm complex by the chaperone CLNS1A that controls the assembly of the core snRNP. To assemble core snRNPs, the SMN complex accepts the trapped 5Sm proteins from CLNS1A. Binding of snRNA inside 5Sm ultimately triggers eviction of the SMN complex, thereby allowing binding of SNRPD3 and SNRPB to complete assembly of the core snRNP. Within the SMN complex, GEMIN2 constrains the conformation of 5Sm, thereby promoting 5Sm binding to snRNA containing the snRNP code (a nonameric Sm site and a 3'-adjacent stem-loop), thus preventing progression of assembly until a cognate substrate is bound. The chain is Gem-associated protein 2 from Homo sapiens (Human).